A 480-amino-acid polypeptide reads, in one-letter code: MKVPAEIFVNNDLQTLLVQELHDTCCGSREEADSAFIPALRQAANVAALPGIVKASLAMPDVHSGYGFCIGNVAAFDMDDPQAVISPGGVGFDINCGVRLIRTNLTEKDVEGSVREELAEALFRNIPVGVGVSGGIPCSIDDLDQLLRNGVDWAIEKGYAWEEDKDHCEENGCMETADPNCVSKRAKKRGLKQLGTLGAGNHYTEIQVVDEVYNTEAAKIMGIGTVGQVCIMIHTGSRGLGHQVATDALQVMEEAMCRDAIDLNDRQLSCARISSKEGREYLAAMSAAANFAWVNRSCITYLARKAFSEVFQRESDDMDMHLVYDVCHNIAKVEQHIVDGEQKTLLVHRKGSTRAYPPCHPDIPKDYQTIGQPVLIGGTMGTCSYVLVGTDKGMAETFGSTCHGAGRALSRNQSRIKLDHNQVLNKLKEDGIAIRVASPKLVTEEAPESYKNVCDVIETCQVAGISEKVVKLRPIAVIKG.

Asp-93, Cys-96, His-202, His-234, and His-328 together coordinate Mn(2+). Residue 201–205 (NHYTE) coordinates GMP. GMP contacts are provided by residues 328–329 (HN), 377–380 (GGTM), Ser-384, 403–406 (HGAG), and Lys-479. His-403 functions as the GMP-histidine intermediate in the catalytic mechanism.

It belongs to the RtcB family. Catalytic component of the tRNA-splicing ligase complex. Mn(2+) is required as a cofactor.

It catalyses the reaction a 3'-end 3'-phospho-ribonucleotide-RNA + a 5'-end dephospho-ribonucleoside-RNA + GTP = a ribonucleotidyl-ribonucleotide-RNA + GMP + diphosphate. It carries out the reaction a 3'-end 2',3'-cyclophospho-ribonucleotide-RNA + a 5'-end dephospho-ribonucleoside-RNA + GTP + H2O = a ribonucleotidyl-ribonucleotide-RNA + GMP + diphosphate + H(+). Functionally, catalytic subunit of the tRNA-splicing ligase complex that acts by directly joining spliced tRNA halves to mature-sized tRNAs by incorporating the precursor-derived splice junction phosphate into the mature tRNA as a canonical 3',5'-phosphodiester. May act as an RNA ligase with broad substrate specificity, and may function toward other RNAs. The protein is RNA-splicing ligase RtcB homolog of Thalassiosira pseudonana (Marine diatom).